We begin with the raw amino-acid sequence, 314 residues long: D-alanine--D-alanine ligase (314 aa).

Residues K114–D309 form the ATP-grasp domain. I140–T195 is a binding site for ATP. 3 residues coordinate Mg(2+): D263, E276, and N278.

The protein belongs to the D-alanine--D-alanine ligase family. Mg(2+) is required as a cofactor. Requires Mn(2+) as cofactor.

Its subcellular location is the cytoplasm. It catalyses the reaction 2 D-alanine + ATP = D-alanyl-D-alanine + ADP + phosphate + H(+). The protein operates within cell wall biogenesis; peptidoglycan biosynthesis. Cell wall formation. This chain is D-alanine--D-alanine ligase, found in Chromohalobacter salexigens (strain ATCC BAA-138 / DSM 3043 / CIP 106854 / NCIMB 13768 / 1H11).